The chain runs to 482 residues: tRNA sulfurtransferase (482 aa).

In terms of domain architecture, THUMP spans 61–165 (LAIRDALTRI…DDRLLLIKGR (105 aa)). ATP is bound by residues 183-184 (LI), lysine 265, glycine 287, and glutamine 296. Cysteine 344 and cysteine 456 are disulfide-bonded. The 79-residue stretch at 404 to 482 (FGANDVILDI…GFANVKVYRP (79 aa)) folds into the Rhodanese domain. The active-site Cysteine persulfide intermediate is cysteine 456.

This sequence belongs to the ThiI family.

The protein resides in the cytoplasm. The catalysed reaction is [ThiI sulfur-carrier protein]-S-sulfanyl-L-cysteine + a uridine in tRNA + 2 reduced [2Fe-2S]-[ferredoxin] + ATP + H(+) = [ThiI sulfur-carrier protein]-L-cysteine + a 4-thiouridine in tRNA + 2 oxidized [2Fe-2S]-[ferredoxin] + AMP + diphosphate. The enzyme catalyses [ThiS sulfur-carrier protein]-C-terminal Gly-Gly-AMP + S-sulfanyl-L-cysteinyl-[cysteine desulfurase] + AH2 = [ThiS sulfur-carrier protein]-C-terminal-Gly-aminoethanethioate + L-cysteinyl-[cysteine desulfurase] + A + AMP + 2 H(+). The protein operates within cofactor biosynthesis; thiamine diphosphate biosynthesis. Functionally, catalyzes the ATP-dependent transfer of a sulfur to tRNA to produce 4-thiouridine in position 8 of tRNAs, which functions as a near-UV photosensor. Also catalyzes the transfer of sulfur to the sulfur carrier protein ThiS, forming ThiS-thiocarboxylate. This is a step in the synthesis of thiazole, in the thiamine biosynthesis pathway. The sulfur is donated as persulfide by IscS. The chain is tRNA sulfurtransferase from Salmonella agona (strain SL483).